A 708-amino-acid chain; its full sequence is Elongation factor G (708 aa).

Positions 8–290 (KRYRNIGISA…AVIQYLPAPM (283 aa)) constitute a tr-type G domain. GTP-binding positions include 17 to 24 (AHIDAGKT), 88 to 92 (DTPGH), and 142 to 145 (NKMD).

Belongs to the TRAFAC class translation factor GTPase superfamily. Classic translation factor GTPase family. EF-G/EF-2 subfamily.

Its subcellular location is the cytoplasm. Its function is as follows. Catalyzes the GTP-dependent ribosomal translocation step during translation elongation. During this step, the ribosome changes from the pre-translocational (PRE) to the post-translocational (POST) state as the newly formed A-site-bound peptidyl-tRNA and P-site-bound deacylated tRNA move to the P and E sites, respectively. Catalyzes the coordinated movement of the two tRNA molecules, the mRNA and conformational changes in the ribosome. The polypeptide is Elongation factor G (Psychrobacter arcticus (strain DSM 17307 / VKM B-2377 / 273-4)).